The chain runs to 91 residues: PqqA binding protein (91 aa).

Belongs to the PqqD family. Monomer. Interacts with PqqE.

The protein operates within cofactor biosynthesis; pyrroloquinoline quinone biosynthesis. In terms of biological role, functions as a PqqA binding protein and presents PqqA to PqqE, in the pyrroloquinoline quinone (PQQ) biosynthetic pathway. The chain is PqqA binding protein from Pseudomonas entomophila (strain L48).